We begin with the raw amino-acid sequence, 110 residues long: Thioredoxin Asp f 29 (110 aa).

The region spanning 1–110 (MSHNVEKITD…LEAAIKAHVA (110 aa)) is the Thioredoxin domain. Active-site nucleophile residues include C34 and C37. A disulfide bridge links C34 with C37.

It belongs to the thioredoxin family.

In terms of biological role, participates in various redox reactions through the reversible oxidation of its active center dithiol to a disulfide and catalyzes dithiol-disulfide exchange reactions. This Aspergillus fumigatus (Neosartorya fumigata) protein is Thioredoxin Asp f 29.